The following is a 278-amino-acid chain: Shikimate dehydrogenase (NADP(+)) (278 aa).

Residues 19–21 (SLS) and Thr-66 contribute to the shikimate site. The active-site Proton acceptor is Lys-70. Residue Asp-82 coordinates NADP(+). Positions 91 and 107 each coordinate shikimate. NADP(+)-binding positions include 133–137 (GSGGA), 157–162 (NRTRAR), and Ile-222. Residue Tyr-224 participates in shikimate binding. Position 245 (Gly-245) interacts with NADP(+).

This sequence belongs to the shikimate dehydrogenase family. Homodimer.

It carries out the reaction shikimate + NADP(+) = 3-dehydroshikimate + NADPH + H(+). The protein operates within metabolic intermediate biosynthesis; chorismate biosynthesis; chorismate from D-erythrose 4-phosphate and phosphoenolpyruvate: step 4/7. Involved in the biosynthesis of the chorismate, which leads to the biosynthesis of aromatic amino acids. Catalyzes the reversible NADPH linked reduction of 3-dehydroshikimate (DHSA) to yield shikimate (SA). The protein is Shikimate dehydrogenase (NADP(+)) of Jannaschia sp. (strain CCS1).